The primary structure comprises 164 residues: UPF0304 protein YfbU (164 aa).

Belongs to the UPF0304 family.

This is UPF0304 protein YfbU from Salmonella choleraesuis (strain SC-B67).